Consider the following 623-residue polypeptide: Xaa-Pro aminopeptidase 1 (623 aa).

Position 77 (Arg77) interacts with a peptide. N6-acetyllysine is present on Lys304. His395 provides a ligand contact to a peptide. The Mn(2+) site is built by Asp415, Asp426, and His489. Residues His489, His498, and Glu523 each contribute to the a peptide site. Glu523 and Glu537 together coordinate Mn(2+).

It belongs to the peptidase M24B family. In terms of assembly, homodimer. The cofactor is Mn(2+). Expressed in all tissues tested, including pancreas, heart, muscle, kidney, liver, lung and brain. Highest levels in pancreas.

The protein localises to the cytoplasm. It is found in the cytosol. It catalyses the reaction Release of any N-terminal amino acid, including proline, that is linked to proline, even from a dipeptide or tripeptide.. With respect to regulation, inhibited by apstatin and the metal ion chelators EDTA and 1,10-phenanthroline. Partially inhibited by dithiothreitol. Not inhibited by enalaprilat or amastatin. Specifically inhibited by the pseudodipeptide CQ31. Inhibition by CQ31 indirectly activates the CARD8 inflammasome: dipeptide accumulation following PEPD inactivation weaky inhibit dipeptidyl peptidases DDP8 and DPP9, relieving DPP8- and/or DPP9-mediated inhibition of CARD8. Metalloaminopeptidase that catalyzes the removal of a penultimate prolyl residue from the N-termini of peptides, such as Arg-Pro-Pro. Contributes to the degradation of bradykinin. This chain is Xaa-Pro aminopeptidase 1, found in Homo sapiens (Human).